The chain runs to 104 residues: Large ribosomal subunit protein uL24 (104 aa).

It belongs to the universal ribosomal protein uL24 family. In terms of assembly, part of the 50S ribosomal subunit.

One of two assembly initiator proteins, it binds directly to the 5'-end of the 23S rRNA, where it nucleates assembly of the 50S subunit. Functionally, one of the proteins that surrounds the polypeptide exit tunnel on the outside of the subunit. The protein is Large ribosomal subunit protein uL24 of Sodalis glossinidius (strain morsitans).